A 116-amino-acid polypeptide reads, in one-letter code: MSVESFTPTAIQFSQGAASKVKSLVDEEGNPRLKLRVFVTGGGCSGFQYGFTFDEDVADDDTVIEREGVSLVVDPMSYQYLAGAEVDYQEGLEGSRFVIKNPNATTTCGCGQSFSI.

Iron-sulfur cluster-binding residues include cysteine 44, cysteine 108, and cysteine 110.

This sequence belongs to the HesB/IscA family. As to quaternary structure, homodimer. It depends on iron-sulfur cluster as a cofactor.

Functionally, required for insertion of 4Fe-4S clusters for at least IspG. The sequence is that of Iron-sulfur cluster insertion protein ErpA from Stutzerimonas stutzeri (strain A1501) (Pseudomonas stutzeri).